The following is a 102-amino-acid chain: Monothiol glutaredoxin-S1 (102 aa).

Residues 1 to 101 form the Glutaredoxin domain; the sequence is MEKISNLLED…SLLRRAGAIW (101 aa). A [2Fe-2S] cluster-binding site is contributed by C21.

The protein belongs to the glutaredoxin family. CC-type subfamily.

Its subcellular location is the cytoplasm. Functionally, may only reduce GSH-thiol disulfides, but not protein disulfides. The sequence is that of Monothiol glutaredoxin-S1 (GRXS1) from Arabidopsis thaliana (Mouse-ear cress).